The chain runs to 1528 residues: DNA topoisomerase 2-alpha (1528 aa).

Residue M1 is modified to N-acetylmethionine. S4 carries the post-translational modification Phosphoserine. A Glycyl lysine isopeptide (Lys-Gly) (interchain with G-Cter in SUMO2) cross-link involves residue K17. ATP is bound by residues N90, N119, and 147 to 149 (SSN). Glycyl lysine isopeptide (Lys-Gly) (interchain with G-Cter in SUMO2) cross-links involve residues K155 and K156. ATP is bound at residue 160-167 (GRNGYGAK). T281 carries the phosphothreonine modification. The segment at 341-343 (KKK) is interaction with DNA. K351 participates in a covalent cross-link: Glycyl lysine isopeptide (Lys-Gly) (interchain with G-Cter in SUMO2). 375–377 (QTK) contacts ATP. Glycyl lysine isopeptide (Lys-Gly) (interchain with G-Cter in SUMO2) cross-links involve residues K385, K396, K415, K417, K424, and K439. The 118-residue stretch at 454 to 571 (CTLILTEGDS…SLLRHRFLEE (118 aa)) folds into the Toprim domain. E460 lines the Mg(2+) pocket. Glycyl lysine isopeptide (Lys-Gly) (interchain with G-Cter in SUMO2) cross-links involve residues K465, K479, and K528. The Mg(2+) site is built by D540 and D542. Residues K583, K598, K613, K621, K624, K631, K638, K654, K661, and K675 each participate in a glycyl lysine isopeptide (Lys-Gly) (interchain with G-Cter in SUMO2) cross-link. The region spanning 714 to 1168 (IPSMVDGLKP…SPSDLWKEDL (455 aa)) is the Topo IIA-type catalytic domain. The O-(5'-phospho-DNA)-tyrosine intermediate role is filled by Y804. Positions 989-998 (KLQSSLTCNS) are interaction with DNA. Residue K1074 forms a Glycyl lysine isopeptide (Lys-Gly) (interchain with G-Cter in SUMO2) linkage. Disordered regions lie at residues 1090–1118 (KEAQQKVPDEEENEESDTETSTSDSAAEA) and 1183–1211 (KQDEQVGLPGKAGKAKGKKAQMCADVLPS). The span at 1098-1107 (DEEENEESDT) shows a compositional bias: acidic residues. S1105 is modified (phosphoserine; by CK1). Over residues 1108–1118 (ETSTSDSAAEA) the composition is skewed to low complexity. Residues K1193 and K1201 each participate in a glycyl lysine isopeptide (Lys-Gly) (interchain with G-Cter in SUMO2) cross-link. S1211 carries the phosphoserine modification. A Glycyl lysine isopeptide (Lys-Gly) (interchain with G-Cter in SUMO2) cross-link involves residue K1226. A disordered region spans residues 1229 to 1528 (AEKKIRKKIK…EESDDDDDLF (300 aa)). K1238 is covalently cross-linked (Glycyl lysine isopeptide (Lys-Gly) (interchain with G-Cter in SUMO1); alternate). K1238 is covalently cross-linked (Glycyl lysine isopeptide (Lys-Gly) (interchain with G-Cter in SUMO2); alternate). T1245 carries the phosphothreonine modification. The span at 1258-1270 (QRIEKKQKKEPGA) shows a compositional bias: basic and acidic residues. Residues K1272, K1279, and K1282 each participate in a glycyl lysine isopeptide (Lys-Gly) (interchain with G-Cter in SUMO2) cross-link. Residues S1291, S1293, S1295, and S1298 each carry the phosphoserine modification. Low complexity predominate over residues 1296–1306 (DVSSNESNVDV). T1323 bears the Phosphothreonine mark. The segment covering 1326 to 1345 (LDSDEDFSGLDEKDEDEDFL) has biased composition (acidic residues). Phosphoserine is present on residues S1328 and S1333. The residue at position 1350 (T1350) is a Phosphothreonine. Residues K1359 and K1363 each participate in a glycyl lysine isopeptide (Lys-Gly) (interchain with G-Cter in SUMO2) cross-link. S1370 and S1373 each carry phosphoserine. Residue K1382 forms a Glycyl lysine isopeptide (Lys-Gly) (interchain with G-Cter in SUMO2) linkage. A phosphoserine mark is found at S1384 and S1388. A Glycyl lysine isopeptide (Lys-Gly) (interchain with G-Cter in SUMO2); alternate cross-link involves residue K1418. Position 1418 is an N6-acetyllysine; alternate (K1418). Positions 1429–1435 (KKRAAPK) are interaction with PLSCR1. K1438 participates in a covalent cross-link: Glycyl lysine isopeptide (Lys-Gly) (interchain with G-Cter in SUMO2); alternate. An N6-acetyllysine; alternate modification is found at K1438. Glycyl lysine isopeptide (Lys-Gly) (interchain with G-Cter in SUMO2) cross-links involve residues K1450 and K1455. Residues S1465, S1467, S1470, and S1472 each carry the phosphoserine modification. Residues K1480 and K1488 each participate in a glycyl lysine isopeptide (Lys-Gly) (interchain with G-Cter in SUMO2) cross-link. The span at 1506–1519 (AKSDRARKPIKYLE) shows a compositional bias: basic and acidic residues. The residue at position 1521 (S1521) is a Phosphoserine.

The protein belongs to the type II topoisomerase family. Homodimer. Interacts with COPS5. Interacts with RECQL5; this stimulates DNA decatenation. Interacts with SETMAR; stimulates the topoisomerase activity. Interacts with DHX9; this interaction occurs in a E2 enzyme UBE2I- and RNA-dependent manner, negatively regulates DHX9-mediated double-stranded DNA and RNA duplex helicase activity and stimulates TOP2A-mediated supercoiled DNA relaxation activity. Interacts with HNRNPU (via C-terminus); this interaction protects the topoisomerase TOP2A from degradation and positively regulates the relaxation of supercoiled DNA in a RNA-dependent manner. Interacts with MCM3AP. Interacts with ERCC6. Interacts with PLSCR1. Interacts with GCNA; this interaction allows the resolution of topoisomerase II (TOP2A) DNA-protein cross-links. Interacts with POL1RA/RPA1 (via dock II) and UBTF in the context of Pol I complex; may assist Pol I transcription initiation by releasing supercoils occurring during DNA unwinding. Interacts with TPRN; TPRN interacts with a number of DNA damage response proteins, is recruited to sites of DNA damage and may play a role in DNA damage repair. Requires Mg(2+) as cofactor. Mn(2+) serves as cofactor. The cofactor is Ca(2+). Phosphorylation has no effect on catalytic activity. However, phosphorylation at Ser-1105 by CSNK1D/CK1 promotes DNA cleavable complex formation.

The protein resides in the cytoplasm. It is found in the nucleus. It localises to the nucleoplasm. Its subcellular location is the nucleolus. It carries out the reaction ATP-dependent breakage, passage and rejoining of double-stranded DNA.. Functionally, key decatenating enzyme that alters DNA topology by binding to two double-stranded DNA molecules, generating a double-stranded break in one of the strands, passing the intact strand through the broken strand, and religating the broken strand. May play a role in regulating the period length of BMAL1 transcriptional oscillation. This Mus musculus (Mouse) protein is DNA topoisomerase 2-alpha (Top2a).